A 294-amino-acid chain; its full sequence is Histone deacetylase HDT3 (294 aa).

The residue at position 1 (methionine 1) is an N-acetylmethionine. Positions 2 to 5 (EFWG) are required to repress transcription. Residues 124 to 269 (QVNFQLPNED…TPKSAGAFGC (146 aa)) form a disordered region. Positions 140-188 (DDADGSEEDSSDDDDSENSGDEEEEKVTAESDSEEDDSSDDEEDDSSEE) are enriched in acidic residues. Positions 189–202 (ETPKKPEEPKKRSA) are enriched in basic and acidic residues. A compositionally biased stretch (low complexity) spans 203 to 213 (EPNSSKNPASN). Polar residues predominate over residues 252 to 262 (GETSKQQQTPK). Residues 267–290 (FGCKSCTRTFTSEMGLQSHTKAKH) form a C2H2-type zinc finger.

The protein belongs to the histone deacetylase HD2 family. Interacts with DNMT2. Expressed in leaves, roots, stems, young plantlets, flowers and siliques. Highest levels in ovules, embryos, shoot apical meristems and first leaves. Also expressed in somatic embryos.

It localises to the nucleus. The protein localises to the nucleolus. Probably mediates the deacetylation of lysine residues on the N-terminal part of the core histones (H2A, H2B, H3 and H4). Histone deacetylation gives a tag for epigenetic repression and plays an important role in transcriptional regulation, cell cycle progression and developmental events. Involved in the modulation of abscisic acid and stress-responsive genes. This chain is Histone deacetylase HDT3 (HDT3), found in Arabidopsis thaliana (Mouse-ear cress).